We begin with the raw amino-acid sequence, 309 residues long: Aspartate carbamoyltransferase catalytic subunit (309 aa).

Carbamoyl phosphate contacts are provided by Arg-55 and Thr-56. Lys-85 serves as a coordination point for L-aspartate. Arg-106, His-135, and Gln-138 together coordinate carbamoyl phosphate. The L-aspartate site is built by Arg-168 and Arg-230. Leu-268 and Pro-269 together coordinate carbamoyl phosphate.

It belongs to the aspartate/ornithine carbamoyltransferase superfamily. ATCase family. In terms of assembly, heterododecamer (2C3:3R2) of six catalytic PyrB chains organized as two trimers (C3), and six regulatory PyrI chains organized as three dimers (R2).

It carries out the reaction carbamoyl phosphate + L-aspartate = N-carbamoyl-L-aspartate + phosphate + H(+). It functions in the pathway pyrimidine metabolism; UMP biosynthesis via de novo pathway; (S)-dihydroorotate from bicarbonate: step 2/3. Catalyzes the condensation of carbamoyl phosphate and aspartate to form carbamoyl aspartate and inorganic phosphate, the committed step in the de novo pyrimidine nucleotide biosynthesis pathway. This chain is Aspartate carbamoyltransferase catalytic subunit, found in Vibrio vulnificus (strain YJ016).